Consider the following 133-residue polypeptide: Small ribosomal subunit protein uS19 (133 aa).

Belongs to the universal ribosomal protein uS19 family.

Its function is as follows. Protein S19 forms a complex with S13 that binds strongly to the 16S ribosomal RNA. The polypeptide is Small ribosomal subunit protein uS19 (Thermococcus sibiricus (strain DSM 12597 / MM 739)).